Reading from the N-terminus, the 213-residue chain is METMYHRFLCIPFLLILGLAQGQSKGLQTVTTFRTGLKPIDVTAIRTGLQPIATFHTGQKPIDVTAIRTGLQPIATFHTGLQPVDVTAIRTGLQPIATFQTGVQRVSTFHGEPASTLQGSGSTVIKKIMVSSMNQPVSKNEGIVEVPPPSGGTHVITEEMNWHGGRNGHKMKKLGKKKHHKNRHGGKNHHKMKKIGKHHGGGRKFGKKHRHHK.

The first 26 residues, 1 to 26 (METMYHRFLCIPFLLILGLAQGQSKG), serve as a signal peptide directing secretion. A run of 3 repeats spans residues 27–48 (LQTVTTFRTGLKPIDVTAIRTG), 49–70 (LQPIATFHTGQKPIDVTAIRTG), and 71–92 (LQPIATFHTGLQPVDVTAIRTG). A 4 X 22 AA approximate tandem repeats region spans residues 27 to 104 (LQTVTTFRTG…PIATFQTGVQ (78 aa)). Residues 93–104 (LQPIATFQTGVQ) form a 4; truncated repeat. A disordered region spans residues 162–213 (WHGGRNGHKMKKLGKKKHHKNRHGGKNHHKMKKIGKHHGGGRKFGKKHRHHK). Positions 166–213 (RNGHKMKKLGKKKHHKNRHGGKNHHKMKKIGKHHGGGRKFGKKHRHHK) are enriched in basic residues.

The protein resides in the secreted. The polypeptide is Skin granule protein (sgp) (Xenopus laevis (African clawed frog)).